Here is a 384-residue protein sequence, read N- to C-terminus: Probable L-tyrosine/L-aspartate decarboxylase (384 aa).

N6-(pyridoxal phosphate)lysine is present on K233.

It belongs to the group II decarboxylase family. MfnA subfamily. Pyridoxal 5'-phosphate serves as cofactor.

The catalysed reaction is L-tyrosine + H(+) = tyramine + CO2. It catalyses the reaction L-aspartate + H(+) = beta-alanine + CO2. The protein operates within cofactor biosynthesis; methanofuran biosynthesis. It participates in cofactor biosynthesis; coenzyme A biosynthesis. In terms of biological role, catalyzes the decarboxylation of L-tyrosine to produce tyramine for methanofuran biosynthesis. Can also catalyze the decarboxylation of L-aspartate to produce beta-alanine for coenzyme A (CoA) biosynthesis. The sequence is that of Probable L-tyrosine/L-aspartate decarboxylase from Methanococcus maripaludis (strain DSM 14266 / JCM 13030 / NBRC 101832 / S2 / LL).